We begin with the raw amino-acid sequence, 60 residues long: Large ribosomal subunit protein uL30 (60 aa).

This sequence belongs to the universal ribosomal protein uL30 family. In terms of assembly, part of the 50S ribosomal subunit.

The chain is Large ribosomal subunit protein uL30 from Lactobacillus johnsonii (strain CNCM I-12250 / La1 / NCC 533).